We begin with the raw amino-acid sequence, 350 residues long: Protein RecA (350 aa).

Gly-67 to Thr-74 provides a ligand contact to ATP.

Belongs to the RecA family.

It is found in the cytoplasm. Its function is as follows. Can catalyze the hydrolysis of ATP in the presence of single-stranded DNA, the ATP-dependent uptake of single-stranded DNA by duplex DNA, and the ATP-dependent hybridization of homologous single-stranded DNAs. It interacts with LexA causing its activation and leading to its autocatalytic cleavage. This Wolinella succinogenes (strain ATCC 29543 / DSM 1740 / CCUG 13145 / JCM 31913 / LMG 7466 / NCTC 11488 / FDC 602W) (Vibrio succinogenes) protein is Protein RecA.